We begin with the raw amino-acid sequence, 314 residues long: Polyamine aminopropyltransferase (314 aa).

One can recognise a PABS domain in the interval 13–249 (WSWFLEWLTP…SMWGFVVASD (237 aa)). Residue Q42 coordinates S-methyl-5'-thioadenosine. Spermidine is bound by residues H73 and E97. Residues D117 and 149 to 150 (DA) contribute to the S-methyl-5'-thioadenosine site. D168 acts as the Proton acceptor in catalysis. P177 contributes to the S-methyl-5'-thioadenosine binding site.

It belongs to the spermidine/spermine synthase family. As to quaternary structure, homodimer or homotetramer.

It localises to the cytoplasm. The catalysed reaction is S-adenosyl 3-(methylsulfanyl)propylamine + putrescine = S-methyl-5'-thioadenosine + spermidine + H(+). Its pathway is amine and polyamine biosynthesis; spermidine biosynthesis; spermidine from putrescine: step 1/1. Functionally, catalyzes the irreversible transfer of a propylamine group from the amino donor S-adenosylmethioninamine (decarboxy-AdoMet) to putrescine (1,4-diaminobutane) to yield spermidine. This chain is Polyamine aminopropyltransferase, found in Aeropyrum pernix (strain ATCC 700893 / DSM 11879 / JCM 9820 / NBRC 100138 / K1).